The primary structure comprises 221 residues: Lactate racemization regulatory protein (221 aa).

The HTH crp-type domain maps to 139-213; the sequence is NGKKGAICAF…NHKFIIQDVS (75 aa). The segment at residues 172-192 is a DNA-binding region (H-T-H motif); it reads NDDIAGFCGISSRSSVNRMLK.

Multimerizes on DNA. Multimerization is required for transcription activation.

With respect to regulation, L-lactate acts as a positive effector on the binding and multimerization of LarR on DNA, while D-lactate antagonizes the positive effect of L-lactate. Its function is as follows. Positive transcriptional regulator that is absolutely required for the expression of lactate racemase (Lar) activity. Controls Lar expression by sensing the L-/D-lactate ration. Binds to a 16-bp palindromic sequence (Lar box motif) that is present in the larR-larA intergenic region, allowing transcription of the larABCDE operon. This is Lactate racemization regulatory protein from Lactiplantibacillus plantarum (strain ATCC BAA-793 / NCIMB 8826 / WCFS1) (Lactobacillus plantarum).